The following is a 268-amino-acid chain: Tryptophan synthase alpha chain (268 aa).

Residues E49 and D60 each act as proton acceptor in the active site.

This sequence belongs to the TrpA family. As to quaternary structure, tetramer of two alpha and two beta chains.

The enzyme catalyses (1S,2R)-1-C-(indol-3-yl)glycerol 3-phosphate + L-serine = D-glyceraldehyde 3-phosphate + L-tryptophan + H2O. It participates in amino-acid biosynthesis; L-tryptophan biosynthesis; L-tryptophan from chorismate: step 5/5. Functionally, the alpha subunit is responsible for the aldol cleavage of indoleglycerol phosphate to indole and glyceraldehyde 3-phosphate. The sequence is that of Tryptophan synthase alpha chain from Shigella boydii serotype 18 (strain CDC 3083-94 / BS512).